We begin with the raw amino-acid sequence, 139 residues long: Large ribosomal subunit protein uL16 (139 aa).

Residues 1–20 (MLIPKRTKYRKQHRPVRRGM) are compositionally biased toward basic residues. The segment at 1–21 (MLIPKRTKYRKQHRPVRRGMS) is disordered.

It belongs to the universal ribosomal protein uL16 family. In terms of assembly, part of the 50S ribosomal subunit.

Functionally, binds 23S rRNA and is also seen to make contacts with the A and possibly P site tRNAs. The chain is Large ribosomal subunit protein uL16 from Bifidobacterium adolescentis (strain ATCC 15703 / DSM 20083 / NCTC 11814 / E194a).